Here is a 209-residue protein sequence, read N- to C-terminus: Probable endopeptidase Cgl2188 (209 aa).

An N-terminal signal peptide occupies residues 1 to 35; it reads MGKHRRNNSNATRKAVAASAVALGATAAIASPAQA. A NlpC/P60 domain is found at 95–209; sequence ASTGQAIVDA…YMPFHSAVRF (115 aa). The Nucleophile role is filled by cysteine 125. Histidine 173 acts as the Proton acceptor in catalysis. Histidine 185 is an active-site residue.

This sequence belongs to the peptidase C40 family.

Its subcellular location is the secreted. In Corynebacterium glutamicum (strain ATCC 13032 / DSM 20300 / JCM 1318 / BCRC 11384 / CCUG 27702 / LMG 3730 / NBRC 12168 / NCIMB 10025 / NRRL B-2784 / 534), this protein is Probable endopeptidase Cgl2188.